We begin with the raw amino-acid sequence, 274 residues long: Putative homeobox protein Meis3-like 1 (274 aa).

The 54-residue stretch at 12–65 (GGDVCSSDSFNEDNTAFAKQVRSERPFFSSNPELDNLMIQAIQVLRFHLLELEK) folds into the MEIS N-terminal domain. Disordered regions lie at residues 108 to 167 (DSGS…KRGI) and 228 to 248 (NRTGQGAAFSPEGQPIGGYTE). Residues 123 to 135 (GLASQSGDNSSDQ) show a composition bias toward polar residues. Positions 161–223 (RNKKRGIFPK…NARRRIVQPM (63 aa)) form a DNA-binding region, homeobox.

Belongs to the TALE/MEIS homeobox family.

The protein localises to the nucleus. The chain is Putative homeobox protein Meis3-like 1 (MEIS3P1) from Homo sapiens (Human).